We begin with the raw amino-acid sequence, 396 residues long: CCA-adding enzyme (396 aa).

ATP is bound by residues glycine 27 and arginine 30. The CTP site is built by glycine 27 and arginine 30. Positions 40 and 42 each coordinate Mg(2+). Positions 111, 154, 157, 160, and 163 each coordinate ATP. CTP-binding residues include arginine 111, aspartate 154, arginine 157, arginine 160, and arginine 163.

It belongs to the tRNA nucleotidyltransferase/poly(A) polymerase family. Bacterial CCA-adding enzyme type 3 subfamily. In terms of assembly, homodimer. Mg(2+) is required as a cofactor.

The catalysed reaction is a tRNA precursor + 2 CTP + ATP = a tRNA with a 3' CCA end + 3 diphosphate. The enzyme catalyses a tRNA with a 3' CCA end + 2 CTP + ATP = a tRNA with a 3' CCACCA end + 3 diphosphate. Its function is as follows. Catalyzes the addition and repair of the essential 3'-terminal CCA sequence in tRNAs without using a nucleic acid template. Adds these three nucleotides in the order of C, C, and A to the tRNA nucleotide-73, using CTP and ATP as substrates and producing inorganic pyrophosphate. tRNA 3'-terminal CCA addition is required both for tRNA processing and repair. Also involved in tRNA surveillance by mediating tandem CCA addition to generate a CCACCA at the 3' terminus of unstable tRNAs. While stable tRNAs receive only 3'-terminal CCA, unstable tRNAs are marked with CCACCA and rapidly degraded. This is CCA-adding enzyme from Pediococcus pentosaceus (strain ATCC 25745 / CCUG 21536 / LMG 10740 / 183-1w).